We begin with the raw amino-acid sequence, 205 residues long: Putative 3-methyladenine DNA glycosylase (205 aa).

Belongs to the DNA glycosylase MPG family.

The protein is Putative 3-methyladenine DNA glycosylase of Bacillus cereus (strain ATCC 14579 / DSM 31 / CCUG 7414 / JCM 2152 / NBRC 15305 / NCIMB 9373 / NCTC 2599 / NRRL B-3711).